Reading from the N-terminus, the 402-residue chain is Phosphopentomutase (402 aa).

Residues Asp10, Asp301, His306, Asp342, His343, and His354 each contribute to the Mn(2+) site.

Belongs to the phosphopentomutase family. It depends on Mn(2+) as a cofactor.

Its subcellular location is the cytoplasm. It catalyses the reaction 2-deoxy-alpha-D-ribose 1-phosphate = 2-deoxy-D-ribose 5-phosphate. The catalysed reaction is alpha-D-ribose 1-phosphate = D-ribose 5-phosphate. It participates in carbohydrate degradation; 2-deoxy-D-ribose 1-phosphate degradation; D-glyceraldehyde 3-phosphate and acetaldehyde from 2-deoxy-alpha-D-ribose 1-phosphate: step 1/2. Isomerase that catalyzes the conversion of deoxy-ribose 1-phosphate (dRib-1-P) and ribose 1-phosphate (Rib-1-P) to deoxy-ribose 5-phosphate (dRib-5-P) and ribose 5-phosphate (Rib-5-P), respectively. This Aeromonas salmonicida (strain A449) protein is Phosphopentomutase.